The sequence spans 481 residues: Leukocyte immunoglobulin-like receptor subfamily A member 6 (481 aa).

Residues 1–23 (MTPALTALLCLGLSLGPRTHVQA) form the signal peptide. The Ig-like C2-type 1 domain maps to 24–118 (GPLPKPTLWA…PSDPLELVVT (95 aa)). The Extracellular segment spans residues 24-447 (GPLPKPTLWA…SHAKDYTVEN (424 aa)). Cys-49 and Cys-98 are oxidised to a cystine. Asn-139 carries N-linked (GlcNAc...) asparagine glycosylation. 2 disulfide bridges follow: Cys-144/Cys-196 and Cys-245/Cys-296. Ig-like C2-type domains follow at residues 225–314 (PSLL…DPLN) and 323–408 (DRVS…HLLS). Asn-301 and Asn-340 each carry an N-linked (GlcNAc...) asparagine glycan. A disulfide bridge links Cys-345 with Cys-396. The disordered stretch occupies residues 418-439 (VSGPSGGPSLPPTGPPSTPASH). Pro residues predominate over residues 426-435 (SLPPTGPPST). The chain crosses the membrane as a helical span at residues 448–468 (LIRMGMAGLVLVVLGILLFEA). Topologically, residues 469–481 (QHSQRSPQDAARR) are cytoplasmic.

The protein localises to the membrane. Its function is as follows. May act as receptor for class I MHC antigens. The polypeptide is Leukocyte immunoglobulin-like receptor subfamily A member 6 (LILRA6) (Pan troglodytes (Chimpanzee)).